Here is a 110-residue protein sequence, read N- to C-terminus: Large ribosomal subunit protein uL22 (110 aa).

The protein belongs to the universal ribosomal protein uL22 family. As to quaternary structure, part of the 50S ribosomal subunit.

Functionally, this protein binds specifically to 23S rRNA; its binding is stimulated by other ribosomal proteins, e.g. L4, L17, and L20. It is important during the early stages of 50S assembly. It makes multiple contacts with different domains of the 23S rRNA in the assembled 50S subunit and ribosome. In terms of biological role, the globular domain of the protein is located near the polypeptide exit tunnel on the outside of the subunit, while an extended beta-hairpin is found that lines the wall of the exit tunnel in the center of the 70S ribosome. The chain is Large ribosomal subunit protein uL22 from Enterobacter sp. (strain 638).